An 858-amino-acid polypeptide reads, in one-letter code: Bifunctional uridylyltransferase/uridylyl-removing enzyme (858 aa).

A uridylyltransferase region spans residues 1–324 (MSASVAEPPP…PATSGVTRVL (324 aa)). Positions 325 to 681 (SPGRFVEKQG…ARPSPVGDAL (357 aa)) are uridylyl-removing. The 123-residue stretch at 443–565 (VDQHILMVLR…VGSERRLTAL (123 aa)) folds into the HD domain. ACT domains follow at residues 682–761 (QVLV…PEPS) and 790–858 (ILSV…AIAV).

Belongs to the GlnD family. Mg(2+) serves as cofactor.

It catalyses the reaction [protein-PII]-L-tyrosine + UTP = [protein-PII]-uridylyl-L-tyrosine + diphosphate. The catalysed reaction is [protein-PII]-uridylyl-L-tyrosine + H2O = [protein-PII]-L-tyrosine + UMP + H(+). Its activity is regulated as follows. Uridylyltransferase (UTase) activity is inhibited by glutamine, while glutamine activates uridylyl-removing (UR) activity. Its function is as follows. Modifies, by uridylylation and deuridylylation, the PII regulatory proteins (GlnB and homologs), in response to the nitrogen status of the cell that GlnD senses through the glutamine level. Under low glutamine levels, catalyzes the conversion of the PII proteins and UTP to PII-UMP and PPi, while under higher glutamine levels, GlnD hydrolyzes PII-UMP to PII and UMP (deuridylylation). Thus, controls uridylylation state and activity of the PII proteins, and plays an important role in the regulation of nitrogen assimilation and metabolism. The polypeptide is Bifunctional uridylyltransferase/uridylyl-removing enzyme (Burkholderia mallei (strain NCTC 10247)).